Here is a 27-residue protein sequence, read N- to C-terminus: Pregnancy-associated glycoprotein 55 (27 aa).

The protein belongs to the peptidase A1 family. Post-translationally, glycosylated. As to expression, placenta.

In Capra hircus (Goat), this protein is Pregnancy-associated glycoprotein 55 (PAG55).